The sequence spans 181 residues: CDP-diacylglycerol--glycerol-3-phosphate 3-phosphatidyltransferase (181 aa).

4 helical membrane-spanning segments follow: residues 8 to 28 (PNYL…LFYI), 35 to 55 (KLGA…GYIA), 64 to 84 (FGKM…TIML), and 148 to 168 (IIYL…LTII).

It belongs to the CDP-alcohol phosphatidyltransferase class-I family.

It is found in the cell membrane. The catalysed reaction is a CDP-1,2-diacyl-sn-glycerol + sn-glycerol 3-phosphate = a 1,2-diacyl-sn-glycero-3-phospho-(1'-sn-glycero-3'-phosphate) + CMP + H(+). It participates in phospholipid metabolism; phosphatidylglycerol biosynthesis; phosphatidylglycerol from CDP-diacylglycerol: step 1/2. In terms of biological role, this protein catalyzes the committed step to the synthesis of the acidic phospholipids. The protein is CDP-diacylglycerol--glycerol-3-phosphate 3-phosphatidyltransferase (pgsA) of Rickettsia prowazekii (strain Madrid E).